The following is a 444-amino-acid chain: Protein Z-dependent protease inhibitor (444 aa).

Residues Met-1 to Gly-21 form the signal peptide. The disordered stretch occupies residues Pro-24–Lys-65. The N-linked (GlcNAc...) asparagine glycan is linked to Asn-36. Ser-56 carries the post-translational modification Phosphoserine; by FAM20C. Residues Ser-56–Lys-65 show a composition bias toward basic and acidic residues. The interval Thr-136–Ser-153 is heparin-binding. N-linked (GlcNAc...) asparagine glycans are attached at residues Asn-180, Asn-197, and Asn-295.

Belongs to the serpin family. Interacts with PROZ. Post-translationally, phosphorylated by FAM20C in the extracellular medium. As to expression, expressed by the liver and secreted in plasma.

It localises to the secreted. Inhibits activity of the coagulation protease factor Xa in the presence of PROZ, calcium and phospholipids. Also inhibits factor XIa in the absence of cofactors. This is Protein Z-dependent protease inhibitor (SERPINA10) from Homo sapiens (Human).